The following is a 416-amino-acid chain: Exodeoxyribonuclease 7 large subunit (416 aa).

It belongs to the XseA family. Heterooligomer composed of large and small subunits.

The protein resides in the cytoplasm. It catalyses the reaction Exonucleolytic cleavage in either 5'- to 3'- or 3'- to 5'-direction to yield nucleoside 5'-phosphates.. Functionally, bidirectionally degrades single-stranded DNA into large acid-insoluble oligonucleotides, which are then degraded further into small acid-soluble oligonucleotides. The protein is Exodeoxyribonuclease 7 large subunit of Nitratiruptor sp. (strain SB155-2).